Here is a 186-residue protein sequence, read N- to C-terminus: UPF0301 protein Saro_0683 (186 aa).

This sequence belongs to the UPF0301 (AlgH) family.

In Novosphingobium aromaticivorans (strain ATCC 700278 / DSM 12444 / CCUG 56034 / CIP 105152 / NBRC 16084 / F199), this protein is UPF0301 protein Saro_0683.